We begin with the raw amino-acid sequence, 229 residues long: Triosephosphate isomerase (229 aa).

Residue 9 to 11 coordinates substrate; sequence NLK. His-93 (electrophile) is an active-site residue. Glu-141 serves as the catalytic Proton acceptor. Substrate-binding positions include Ile-146, Gly-181, and 202-203; that span reads AS.

This sequence belongs to the triosephosphate isomerase family. Homotetramer; dimer of dimers.

It localises to the cytoplasm. The catalysed reaction is D-glyceraldehyde 3-phosphate = dihydroxyacetone phosphate. The protein operates within carbohydrate biosynthesis; gluconeogenesis. It participates in carbohydrate degradation; glycolysis; D-glyceraldehyde 3-phosphate from glycerone phosphate: step 1/1. In terms of biological role, involved in the gluconeogenesis. Catalyzes stereospecifically the conversion of dihydroxyacetone phosphate (DHAP) to D-glyceraldehyde-3-phosphate (G3P). This is Triosephosphate isomerase from Pyrobaculum islandicum (strain DSM 4184 / JCM 9189 / GEO3).